A 215-amino-acid chain; its full sequence is Endoplasmic reticulum vesicle protein 25 (215 aa).

The first 21 residues, Met1–Gly21, serve as a signal peptide directing secretion. The Lumenal segment spans residues Leu22–Lys184. The 92-residue stretch at Pro34 to Ser125 folds into the GOLD domain. A helical membrane pass occupies residues Trp185–Leu205. Residues Arg206–Ile215 lie on the Cytoplasmic side of the membrane.

It belongs to the EMP24/GP25L family.

It is found in the endoplasmic reticulum membrane. Its subcellular location is the golgi apparatus membrane. In terms of biological role, constituent of COPII-coated endoplasmic reticulum-derived transport vesicles. Required for efficient transport of a subset of secretory proteins to the Golgi. Facilitates retrograde transport from the Golgi to the endoplasmic reticulum. In Candida albicans (strain SC5314 / ATCC MYA-2876) (Yeast), this protein is Endoplasmic reticulum vesicle protein 25 (ERV25).